The sequence spans 247 residues: Carboxy-S-adenosyl-L-methionine synthase (247 aa).

Residues Tyr40, 65–67 (GAS), 90–91 (DN), 122–123 (DI), Asn137, and Arg204 contribute to the S-adenosyl-L-methionine site.

It belongs to the class I-like SAM-binding methyltransferase superfamily. Cx-SAM synthase family. In terms of assembly, homodimer.

The enzyme catalyses prephenate + S-adenosyl-L-methionine = carboxy-S-adenosyl-L-methionine + 3-phenylpyruvate + H2O. Catalyzes the conversion of S-adenosyl-L-methionine (SAM) to carboxy-S-adenosyl-L-methionine (Cx-SAM). In Pseudomonas fluorescens (strain Pf0-1), this protein is Carboxy-S-adenosyl-L-methionine synthase.